The sequence spans 174 residues: NADH-ubiquinone oxidoreductase chain 6 (174 aa).

The next 4 membrane-spanning stretches (helical) occupy residues 24–44, 48–68, 82–102, and 143–163; these read LAMG…TGLM, FWFS…LFIY, MKLT…NILL, and LMTI…VKIT.

This sequence belongs to the complex I subunit 6 family.

It is found in the mitochondrion membrane. It carries out the reaction a ubiquinone + NADH + 5 H(+)(in) = a ubiquinol + NAD(+) + 4 H(+)(out). Functionally, core subunit of the mitochondrial membrane respiratory chain NADH dehydrogenase (Complex I) that is believed to belong to the minimal assembly required for catalysis. Complex I functions in the transfer of electrons from NADH to the respiratory chain. The immediate electron acceptor for the enzyme is believed to be ubiquinone. The sequence is that of NADH-ubiquinone oxidoreductase chain 6 (ND6) from Ceratitis capitata (Mediterranean fruit fly).